The chain runs to 332 residues: Biotin synthase (332 aa).

Residues 47–273 form the Radical SAM core domain; that stretch reads YYGNKVKLNM…MNPTKEIRIA (227 aa). [4Fe-4S] cluster is bound by residues Cys-65, Cys-69, and Cys-72. [2Fe-2S] cluster-binding residues include Cys-109, Cys-141, Cys-201, and Arg-271.

The protein belongs to the radical SAM superfamily. Biotin synthase family. As to quaternary structure, homodimer. [4Fe-4S] cluster serves as cofactor. [2Fe-2S] cluster is required as a cofactor.

The catalysed reaction is (4R,5S)-dethiobiotin + (sulfur carrier)-SH + 2 reduced [2Fe-2S]-[ferredoxin] + 2 S-adenosyl-L-methionine = (sulfur carrier)-H + biotin + 2 5'-deoxyadenosine + 2 L-methionine + 2 oxidized [2Fe-2S]-[ferredoxin]. It participates in cofactor biosynthesis; biotin biosynthesis; biotin from 7,8-diaminononanoate: step 2/2. Catalyzes the conversion of dethiobiotin (DTB) to biotin by the insertion of a sulfur atom into dethiobiotin via a radical-based mechanism. The polypeptide is Biotin synthase (Geobacillus thermodenitrificans (strain NG80-2)).